The sequence spans 368 residues: Chaperone protein DnaJ (368 aa).

Positions 5-75 (DFYKILGVEK…TKRKQYDKFG (71 aa)) constitute a J domain. The segment at 139–222 (GKEISQKLTK…CRGKTIVETK (84 aa)) adopts a CR-type zinc-finger fold. Positions 152, 155, 169, 172, 196, 199, 210, and 213 each coordinate Zn(2+). 4 CXXCXGXG motif repeats span residues 152–159 (CDNCKGSG), 169–176 (CYNCQGRG), 196–203 (CSVCLGSG), and 210–217 (CKKCRGKT).

The protein belongs to the DnaJ family. In terms of assembly, homodimer. Zn(2+) serves as cofactor.

Its subcellular location is the cytoplasm. Functionally, participates actively in the response to hyperosmotic and heat shock by preventing the aggregation of stress-denatured proteins and by disaggregating proteins, also in an autonomous, DnaK-independent fashion. Unfolded proteins bind initially to DnaJ; upon interaction with the DnaJ-bound protein, DnaK hydrolyzes its bound ATP, resulting in the formation of a stable complex. GrpE releases ADP from DnaK; ATP binding to DnaK triggers the release of the substrate protein, thus completing the reaction cycle. Several rounds of ATP-dependent interactions between DnaJ, DnaK and GrpE are required for fully efficient folding. Also involved, together with DnaK and GrpE, in the DNA replication of plasmids through activation of initiation proteins. In Mesomycoplasma hyopneumoniae (strain 232) (Mycoplasma hyopneumoniae), this protein is Chaperone protein DnaJ.